Consider the following 248-residue polypeptide: Functional amyloid sbunit FapE (248 aa).

Residues 1–20 form the signal peptide; sequence MNTSRWLTALCLAASMPAYA.

This sequence belongs to the FapE family. A minor component of purified amyloid fibrils. Fibrils are resistant to boiling in 2% (weight/vol) SDS and require &gt;90% (vol/vol) formic acid to dissolve.

It localises to the fimbrium. The protein localises to the secreted. Functionally, a minor component of the functional amyloid in this bacterium. Upon overexpression of the endogenous six-gene locus (fapA-fapF) in situ, cells form large clumps during liquid growth, make large amounts of biofilm and produce amyloid fibrils. Expression of the 6 gene operon in E.coli strain BL21(DE3) induces flocculation and biofilm formation with copious extracellular fibrils. The chain is Functional amyloid sbunit FapE from Pseudomonas fluorescens.